The chain runs to 504 residues: Glycerol kinase (504 aa).

Residue Thr-12 coordinates ADP. ATP contacts are provided by Thr-12, Thr-13, and Ser-14. Sn-glycerol 3-phosphate is bound at residue Thr-12. Residue Arg-16 participates in ADP binding. The sn-glycerol 3-phosphate site is built by Arg-82, Glu-83, Tyr-134, and Asp-246. Glycerol-binding residues include Arg-82, Glu-83, Tyr-134, Asp-246, and Gln-247. ADP contacts are provided by Thr-268 and Gly-312. Residues Thr-268, Gly-312, Gln-316, and Gly-413 each contribute to the ATP site. The ADP site is built by Gly-413 and Asn-417.

Belongs to the FGGY kinase family.

It catalyses the reaction glycerol + ATP = sn-glycerol 3-phosphate + ADP + H(+). Its pathway is polyol metabolism; glycerol degradation via glycerol kinase pathway; sn-glycerol 3-phosphate from glycerol: step 1/1. With respect to regulation, inhibited by fructose 1,6-bisphosphate (FBP). Functionally, key enzyme in the regulation of glycerol uptake and metabolism. Catalyzes the phosphorylation of glycerol to yield sn-glycerol 3-phosphate. The sequence is that of Glycerol kinase from Paenarthrobacter aurescens (strain TC1).